The sequence spans 225 residues: PKHD-type hydroxylase YbiX (225 aa).

Residues 78 to 177 (TLSTPLFNRY…RVASFMWIQS (100 aa)) enclose the Fe2OG dioxygenase domain. 3 residues coordinate Fe cation: His-96, Asp-98, and His-158. Arg-168 contacts 2-oxoglutarate.

Fe(2+) is required as a cofactor. It depends on L-ascorbate as a cofactor.

The sequence is that of PKHD-type hydroxylase YbiX from Shigella flexneri serotype 5b (strain 8401).